Consider the following 564-residue polypeptide: Probable beta-glucosidase btgE (564 aa).

The N-terminal stretch at 1 to 18 (MRGAFLATAAAIAGTAMA) is a signal peptide. Positions 285-304 (ATSSVAPSSSPSKPAAPSGA) are disordered. N404 is a glycosylation site (N-linked (GlcNAc...) asparagine). Residue E405 is the Proton donor of the active site. The Nucleophile role is filled by E501.

This sequence belongs to the glycosyl hydrolase 17 family.

Its subcellular location is the secreted. It is found in the cell wall. It catalyses the reaction Hydrolysis of terminal, non-reducing beta-D-glucosyl residues with release of beta-D-glucose.. Its pathway is glycan metabolism; cellulose degradation. Functionally, beta-glucosidases are one of a number of cellulolytic enzymes involved in the degradation of cellulosic biomass. Catalyzes the last step releasing glucose from the inhibitory cellobiose. The sequence is that of Probable beta-glucosidase btgE (btgE) from Aspergillus clavatus (strain ATCC 1007 / CBS 513.65 / DSM 816 / NCTC 3887 / NRRL 1 / QM 1276 / 107).